Reading from the N-terminus, the 387-residue chain is TSC22 domain family protein 4 (387 aa).

Disordered stretches follow at residues 1-85 and 135-232; these read MSGG…GEPY and ISTP…RRDG. The span at 28-51 shows a compositional bias: pro residues; it reads SDPPAPPAPAGPPPRLPNGEPNPD. Thr-57 bears the Phosphothreonine mark. Ser-62 and Ser-165 each carry phosphoserine. Thr-183 is subject to Phosphothreonine. Ser-187 and Ser-189 each carry phosphoserine. Thr-223 bears the Phosphothreonine mark. Phosphoserine is present on residues Ser-254, Ser-258, and Ser-271. Residues 336–357 are leucine-zipper; the sequence is LKEQIRDLAERNAALEQENGLL. The residue at position 362 (Ser-362) is a Phosphoserine. Positions 368–387 are disordered; the sequence is QLPSSGLPRLGPSAPNGPSI.

The protein belongs to the TSC-22/Dip/Bun family. In terms of assembly, forms a homodimer or heterodimer. Forms a heterodimer with TSC22D1 isoforms 1 and 2. Interacts with NRBP1.

The protein localises to the nucleus. It is found in the cytoplasm. The protein resides in the cell projection. Its subcellular location is the dendrite. It localises to the synapse. In terms of biological role, binds DNA and acts as a transcriptional repressor. Involved in the regulation of systematic glucose homeostasis and insulin sensitivity, via transcriptional repression of downstream insulin signaling targets such as OBP2A/LCN13. Acts as a negative regulator of lipogenic gene expression in hepatocytes and thereby mediates the control of very low-density lipoprotein release. May play a role in neurite elongation and survival. This is TSC22 domain family protein 4 from Rattus norvegicus (Rat).